A 207-amino-acid chain; its full sequence is Dephospho-CoA kinase (207 aa).

Residues 4-204 form the DPCK domain; sequence VVGLTGGIGS…HLYLQFAEIF (201 aa). ATP is bound at residue 12–17; it reads GSGKST.

It belongs to the CoaE family.

The protein resides in the cytoplasm. The enzyme catalyses 3'-dephospho-CoA + ATP = ADP + CoA + H(+). The protein operates within cofactor biosynthesis; coenzyme A biosynthesis; CoA from (R)-pantothenate: step 5/5. In terms of biological role, catalyzes the phosphorylation of the 3'-hydroxyl group of dephosphocoenzyme A to form coenzyme A. In Aggregatibacter actinomycetemcomitans (Actinobacillus actinomycetemcomitans), this protein is Dephospho-CoA kinase.